Here is a 972-residue protein sequence, read N- to C-terminus: Macrophage colony-stimulating factor 1 receptor (972 aa).

A signal peptide spans 1 to 19 (MGPGVLLLLLVATAWHGQG). The Extracellular portion of the chain corresponds to 20–517 (IPVIEPSVPE…HPPDEFLFTP (498 aa)). Ig-like C2-type domains are found at residues 21–104 (PVIE…VKDP), 107–197 (PWNV…KVQK), 203–290 (PALT…HSTS), 299–399 (AYLN…LTLR), and 402–502 (PEVS…IPIS). Intrachain disulfides connect Cys-42/Cys-84, Cys-127/Cys-177, and Cys-224/Cys-278. N-linked (GlcNAc...) asparagine glycans are attached at residues Asn-45, Asn-73, Asn-153, Asn-240, Asn-275, Asn-302, Asn-335, Asn-353, Asn-412, Asn-428, and Asn-480. Residues Cys-419 and Cys-485 are joined by a disulfide bond. The helical transmembrane segment at 518-538 (VVVACMSIMALLLLLLLLLLY) threads the bilayer. Residues 539 to 972 (KYKQKPKYQV…LLQPNNYQFC (434 aa)) lie on the Cytoplasmic side of the membrane. Residues 542 to 574 (QKPKYQVRWKIIESYEGNSYTFIDPTQLPYNEK) are regulatory juxtamembrane domain. Tyr-546 and Tyr-561 each carry phosphotyrosine; by autocatalysis. The region spanning 582–910 (LQFGKTLGAG…PTFQQICSFL (329 aa)) is the Protein kinase domain. ATP is bound by residues 588–596 (LGAGAFGKV) and Lys-616. Phosphotyrosine; by autocatalysis is present on residues Tyr-699 and Tyr-708. Residue Ser-713 is modified to Phosphoserine. At Tyr-723 the chain carries Phosphotyrosine; by autocatalysis. The active-site Proton acceptor is the Asp-778. The interval 796 to 818 (DFGLARDIMNDSNYIVKGNARLP) is activation loop. Phosphotyrosine; by autocatalysis occurs at positions 809 and 923. The disordered stretch occupies residues 918-950 (RRERDYTNLPSSSRSGGSGSSSSELEEESSSEH). A compositionally biased stretch (low complexity) spans 928–940 (SSSRSGGSGSSSS). At Tyr-969 the chain carries Phosphotyrosine; by autocatalysis.

Belongs to the protein kinase superfamily. Tyr protein kinase family. CSF-1/PDGF receptor subfamily. As to quaternary structure, interacts with INPPL1/SHIP2 and THOC5. Monomer. Homodimer. Interacts with CSF1 and IL34. Interaction with dimeric CSF1 or IL34 leads to receptor homodimerization. Interacts (tyrosine phosphorylated) with PLCG2 (via SH2 domain). Interacts (tyrosine phosphorylated) with PIK3R1 (via SH2 domain). Interacts (tyrosine phosphorylated) with FYN, YES1 and SRC (via SH2 domain). Interacts (tyrosine phosphorylated) with CBL, GRB2 and SLA2. Autophosphorylated in response to CSF1 or IL34 binding. Phosphorylation at Tyr-561 is important for normal down-regulation of signaling by ubiquitination, internalization and degradation. Phosphorylation at Tyr-561 and Tyr-809 is important for interaction with SRC family members, including FYN, YES1 and SRC, and for subsequent activation of these protein kinases. Phosphorylation at Tyr-699 and Tyr-923 is important for interaction with GRB2. Phosphorylation at Tyr-723 is important for interaction with PIK3R1. Phosphorylation at Tyr-708 is important for normal receptor degradation. Phosphorylation at Tyr-723 and Tyr-809 is important for interaction with PLCG2. Phosphorylation at Tyr-969 is important for interaction with CBL. Dephosphorylation by PTPN2 negatively regulates downstream signaling and macrophage differentiation. In terms of processing, ubiquitinated. Becomes rapidly polyubiquitinated after autophosphorylation, leading to its degradation. Expressed in bone marrow and in differentiated blood mononuclear cells.

Its subcellular location is the cell membrane. The enzyme catalyses L-tyrosyl-[protein] + ATP = O-phospho-L-tyrosyl-[protein] + ADP + H(+). Its activity is regulated as follows. Present in an inactive conformation in the absence of bound ligand. CSF1 or IL34 binding leads to dimerization and activation by autophosphorylation on tyrosine residues. Inhibited by imatinib/STI-571 (Gleevec), dasatinib, sunitinib/SU11248, lestaurtinib/CEP-701, midostaurin/PKC-412, Ki20227, linifanib/ABT-869, Axitinib/AG013736, sorafenib/BAY 43-9006 and GW2580. Functionally, tyrosine-protein kinase that acts as a cell-surface receptor for CSF1 and IL34 and plays an essential role in the regulation of survival, proliferation and differentiation of hematopoietic precursor cells, especially mononuclear phagocytes, such as macrophages and monocytes. Promotes the release of pro-inflammatory chemokines in response to IL34 and CSF1, and thereby plays an important role in innate immunity and in inflammatory processes. Plays an important role in the regulation of osteoclast proliferation and differentiation, the regulation of bone resorption, and is required for normal bone and tooth development. Required for normal male and female fertility, and for normal development of milk ducts and acinar structures in the mammary gland during pregnancy. Promotes reorganization of the actin cytoskeleton, regulates formation of membrane ruffles, cell adhesion and cell migration, and promotes cancer cell invasion. Activates several signaling pathways in response to ligand binding, including the ERK1/2 and the JNK pathway. Phosphorylates PIK3R1, PLCG2, GRB2, SLA2 and CBL. Activation of PLCG2 leads to the production of the cellular signaling molecules diacylglycerol and inositol 1,4,5-trisphosphate, that then lead to the activation of protein kinase C family members, especially PRKCD. Phosphorylation of PIK3R1, the regulatory subunit of phosphatidylinositol 3-kinase, leads to activation of the AKT1 signaling pathway. Activated CSF1R also mediates activation of the MAP kinases MAPK1/ERK2 and/or MAPK3/ERK1, and of the SRC family kinases SRC, FYN and YES1. Activated CSF1R transmits signals both via proteins that directly interact with phosphorylated tyrosine residues in its intracellular domain, or via adapter proteins, such as GRB2. Promotes activation of STAT family members STAT3, STAT5A and/or STAT5B. Promotes tyrosine phosphorylation of SHC1 and INPP5D/SHIP-1. Receptor signaling is down-regulated by protein phosphatases, such as INPP5D/SHIP-1, that dephosphorylate the receptor and its downstream effectors, and by rapid internalization of the activated receptor. In the central nervous system, may play a role in the development of microglia macrophages. The sequence is that of Macrophage colony-stimulating factor 1 receptor (CSF1R) from Homo sapiens (Human).